Reading from the N-terminus, the 146-residue chain is 3-dehydroquinate dehydratase (146 aa).

Tyrosine 23 (proton acceptor) is an active-site residue. Residues asparagine 74, histidine 80, and aspartate 87 each contribute to the substrate site. The Proton donor role is filled by histidine 100. Substrate contacts are provided by residues 101–102 and arginine 111; that span reads IS.

Belongs to the type-II 3-dehydroquinase family. As to quaternary structure, homododecamer.

The catalysed reaction is 3-dehydroquinate = 3-dehydroshikimate + H2O. The protein operates within metabolic intermediate biosynthesis; chorismate biosynthesis; chorismate from D-erythrose 4-phosphate and phosphoenolpyruvate: step 3/7. Functionally, catalyzes a trans-dehydration via an enolate intermediate. In Bacillus cereus (strain G9842), this protein is 3-dehydroquinate dehydratase.